The following is a 456-amino-acid chain: Chitobiosyldiphosphodolichol beta-mannosyltransferase (456 aa).

The Lumenal portion of the chain corresponds to 1–22 (MGEIIKYKGFDHVWQYSGPWLY). The chain crosses the membrane as a helical span at residues 23–43 (CLIGIYISLPVLAYHILPWIF). Over 44-103 (HKNRSNKRKTISIFVLGDLGHSPRMCYHASSFSKLDYYVNLCGYVETEPSHQIVDDVNID) the chain is Cytoplasmic. The helical intramembrane region spans 104–124 (IIPIEAIKNTNNLPYIMFAIL). Residues 125 to 456 (KVVRQCGKIW…TFSSIFENKS (332 aa)) lie on the Cytoplasmic side of the membrane.

This sequence belongs to the glycosyltransferase group 1 family.

It is found in the endoplasmic reticulum membrane. The enzyme catalyses an N,N'-diacetylchitobiosyl-diphospho-di-trans,poly-cis-dolichol + GDP-alpha-D-mannose = a beta-D-Man-(1-&gt;4)-beta-D-GlcNAc-(1-&gt;4)-alpha-D-GlcNAc-diphospho-di-trans,poly-cis-dolichol + GDP + H(+). It functions in the pathway protein modification; protein glycosylation. In terms of biological role, participates in the formation of the lipid-linked precursor oligosaccharide for N-glycosylation. Involved in assembling the dolichol-pyrophosphate-GlcNAc(2)-Man(5) intermediate on the cytoplasmic surface of the ER. The chain is Chitobiosyldiphosphodolichol beta-mannosyltransferase (ALG1) from Candida albicans (strain SC5314 / ATCC MYA-2876) (Yeast).